Reading from the N-terminus, the 356-residue chain is Phospho-N-acetylmuramoyl-pentapeptide-transferase (356 aa).

The next 10 helical transmembrane spans lie at 25 to 45 (TIAA…SIIA), 70 to 90 (GTPT…AFLW), 93 to 113 (LSNI…AIGF), 138 to 158 (FFVA…GFAL), 164 to 184 (YLIH…VATG), 195 to 215 (GLAI…AYLC), 235 to 255 (LAVL…FNAP), 258 to 278 (AIFM…TVAV), 284 to 304 (IVLV…VIQV), and 333 to 353 (QVVI…LSTL).

The protein belongs to the glycosyltransferase 4 family. MraY subfamily. Mg(2+) serves as cofactor.

It is found in the cell inner membrane. It carries out the reaction UDP-N-acetyl-alpha-D-muramoyl-L-alanyl-gamma-D-glutamyl-meso-2,6-diaminopimeloyl-D-alanyl-D-alanine + di-trans,octa-cis-undecaprenyl phosphate = di-trans,octa-cis-undecaprenyl diphospho-N-acetyl-alpha-D-muramoyl-L-alanyl-D-glutamyl-meso-2,6-diaminopimeloyl-D-alanyl-D-alanine + UMP. The protein operates within cell wall biogenesis; peptidoglycan biosynthesis. Functionally, catalyzes the initial step of the lipid cycle reactions in the biosynthesis of the cell wall peptidoglycan: transfers peptidoglycan precursor phospho-MurNAc-pentapeptide from UDP-MurNAc-pentapeptide onto the lipid carrier undecaprenyl phosphate, yielding undecaprenyl-pyrophosphoryl-MurNAc-pentapeptide, known as lipid I. The polypeptide is Phospho-N-acetylmuramoyl-pentapeptide-transferase (Bartonella tribocorum (strain CIP 105476 / IBS 506)).